Consider the following 257-residue polypeptide: uncharacterized protein (257 aa).

This is an uncharacterized protein from Mycobacterium tuberculosis (strain CDC 1551 / Oshkosh).